We begin with the raw amino-acid sequence, 426 residues long: Putative phosphate permease CT_962 (426 aa).

The next 11 helical transmembrane spans lie at 1-21 (MWLLLVCVVVGGFYTAWNIGA), 37-57 (LTLKQAVLIAAVFEFLGAVLL), 83-103 (VFGMTAALLATGVWLQIASFC), 104-124 (GWPVSTTHAIVGAVLGFGIIL), 140-160 (VSWLASPIIGGYFAFLIFSFI), 183-203 (AIIIFALGLVLILSGAVAPVI), 207-227 (PALRIVCGLSLFAFFFTIWGI), 260-280 (LIVERIFAYLQMIIACFMSFA), 309-329 (VLLVFMSLGGLGLVCGLATWG), 365-385 (LGFPISTTHVVVGSVLGIGFA), and 399-419 (IVLSWFITVPAGAALSIVFFL).

The protein belongs to the inorganic phosphate transporter (PiT) (TC 2.A.20) family.

It is found in the cell membrane. Potential transporter for phosphate. The chain is Putative phosphate permease CT_962 from Chlamydia trachomatis serovar D (strain ATCC VR-885 / DSM 19411 / UW-3/Cx).